We begin with the raw amino-acid sequence, 457 residues long: ATP synthase subunit beta (457 aa).

147–154 is an ATP binding site; sequence GGAGVGKT.

The protein belongs to the ATPase alpha/beta chains family. In terms of assembly, F-type ATPases have 2 components, CF(1) - the catalytic core - and CF(0) - the membrane proton channel. CF(1) has five subunits: alpha(3), beta(3), gamma(1), delta(1), epsilon(1). CF(0) has three main subunits: a(1), b(2) and c(9-12). The alpha and beta chains form an alternating ring which encloses part of the gamma chain. CF(1) is attached to CF(0) by a central stalk formed by the gamma and epsilon chains, while a peripheral stalk is formed by the delta and b chains.

Its subcellular location is the cell inner membrane. It carries out the reaction ATP + H2O + 4 H(+)(in) = ADP + phosphate + 5 H(+)(out). In terms of biological role, produces ATP from ADP in the presence of a proton gradient across the membrane. The catalytic sites are hosted primarily by the beta subunits. This is ATP synthase subunit beta from Glaesserella parasuis serovar 5 (strain SH0165) (Haemophilus parasuis).